Consider the following 265-residue polypeptide: Secreted RxLR effector protein 146 (265 aa).

The first 25 residues, 1 to 25, serve as a signal peptide directing secretion; that stretch reads MRYYTQVVAASLVATLAVVDSIVFA. Positions 32–50 match the RxLR-dEER motif; it reads RFLRQDGATVTRGGKGEER. 2 N-linked (GlcNAc...) asparagine glycosylation sites follow: asparagine 71 and asparagine 148.

This sequence belongs to the RxLR effector family.

It is found in the secreted. It localises to the host nucleus. Its subcellular location is the host cytoplasm. Functionally, secreted effector that completely suppresses the host cell death induced by cell death-inducing proteins. This is Secreted RxLR effector protein 146 from Plasmopara viticola (Downy mildew of grapevine).